We begin with the raw amino-acid sequence, 267 residues long: Imidazole glycerol phosphate synthase subunit HisF (267 aa).

Catalysis depends on residues Asp-21 and Asp-140.

This sequence belongs to the HisA/HisF family. In terms of assembly, heterodimer of HisH and HisF.

It is found in the cytoplasm. The catalysed reaction is 5-[(5-phospho-1-deoxy-D-ribulos-1-ylimino)methylamino]-1-(5-phospho-beta-D-ribosyl)imidazole-4-carboxamide + L-glutamine = D-erythro-1-(imidazol-4-yl)glycerol 3-phosphate + 5-amino-1-(5-phospho-beta-D-ribosyl)imidazole-4-carboxamide + L-glutamate + H(+). Its pathway is amino-acid biosynthesis; L-histidine biosynthesis; L-histidine from 5-phospho-alpha-D-ribose 1-diphosphate: step 5/9. IGPS catalyzes the conversion of PRFAR and glutamine to IGP, AICAR and glutamate. The HisF subunit catalyzes the cyclization activity that produces IGP and AICAR from PRFAR using the ammonia provided by the HisH subunit. This is Imidazole glycerol phosphate synthase subunit HisF from Bordetella avium (strain 197N).